A 290-amino-acid chain; its full sequence is Bifunctional protein FolD (290 aa).

Residues Gly165 to Gly167, Ser194, and Ile235 each bind NADP(+).

The protein belongs to the tetrahydrofolate dehydrogenase/cyclohydrolase family. As to quaternary structure, homodimer.

It catalyses the reaction (6R)-5,10-methylene-5,6,7,8-tetrahydrofolate + NADP(+) = (6R)-5,10-methenyltetrahydrofolate + NADPH. The catalysed reaction is (6R)-5,10-methenyltetrahydrofolate + H2O = (6R)-10-formyltetrahydrofolate + H(+). It participates in one-carbon metabolism; tetrahydrofolate interconversion. Functionally, catalyzes the oxidation of 5,10-methylenetetrahydrofolate to 5,10-methenyltetrahydrofolate and then the hydrolysis of 5,10-methenyltetrahydrofolate to 10-formyltetrahydrofolate. The sequence is that of Bifunctional protein FolD from Syntrophotalea carbinolica (strain DSM 2380 / NBRC 103641 / GraBd1) (Pelobacter carbinolicus).